The chain runs to 326 residues: Phenylserine dehydratase (326 aa).

Monomer. It depends on pyridoxal 5'-phosphate as a cofactor.

The enzyme catalyses L-threo-3-phenylserine = 3-phenylpyruvate + NH4(+). Its activity is regulated as follows. Inhibited by phenylhydrazine, hydroxylamine, p-chloromercuribenzoate, and HgCl(2). The sequence is that of Phenylserine dehydratase from Ralstonia pickettii (Burkholderia pickettii).